An 834-amino-acid polypeptide reads, in one-letter code: U-box domain-containing protein 33 (834 aa).

Positions 232–308 (FSTPESEHQH…SPSSFPDGVD (77 aa)) are disordered. 2 stretches are compositionally biased toward polar residues: residues 243-273 (SRVQ…GSLN) and 284-293 (SEVTGSATVM). The stretch at 334–462 (LRRQKAEKNA…SHAETSTLQL (129 aa)) forms a coiled coil. A Protein kinase domain is found at 481–744 (FDSTLKIGEG…EVWRVLEPMR (264 aa)). ATP-binding positions include 487 to 495 (IGEGGYGSI) and Lys-508. The active-site Proton acceptor is the Asp-603. A U-box domain is found at 762–834 (IAPPYFICPI…AIQEWLQHHL (73 aa)).

Belongs to the protein kinase superfamily. Ser/Thr protein kinase family.

It carries out the reaction L-seryl-[protein] + ATP = O-phospho-L-seryl-[protein] + ADP + H(+). The catalysed reaction is L-threonyl-[protein] + ATP = O-phospho-L-threonyl-[protein] + ADP + H(+). The enzyme catalyses S-ubiquitinyl-[E2 ubiquitin-conjugating enzyme]-L-cysteine + [acceptor protein]-L-lysine = [E2 ubiquitin-conjugating enzyme]-L-cysteine + N(6)-ubiquitinyl-[acceptor protein]-L-lysine.. The protein operates within protein modification; protein ubiquitination. Functionally, functions as an E3 ubiquitin ligase. The polypeptide is U-box domain-containing protein 33 (PUB33) (Arabidopsis thaliana (Mouse-ear cress)).